A 241-amino-acid chain; its full sequence is Terpene cyclase olcD (241 aa).

7 consecutive transmembrane segments (helical) span residues 19 to 39 (LSDILLVTLASGWLVCYFATI), 49 to 71 (WMPLLPLSCNVAWELVFITLYPP), 76 to 95 (ILGFWLLVNLGVIYSALRFA), 108 to 128 (YLPVLFVLAVGFWAWGHLALI), 137 to 157 (FYYGGMACQLMTSAAALSGLV), 166 to 186 (SYTIWLSRVIGTSSALAGLFF), and 202 to 222 (LMRWLAAAFGILDGVYGVQFW).

Belongs to the paxB family.

It localises to the membrane. Its pathway is secondary metabolite biosynthesis; terpenoid biosynthesis. Functionally, terpene cyclase; part of the gene cluster that mediates the biosynthesis of 15-deoxyoxalicine B. The first step of the pathway is the synthesis of nicotinyl-CoA from nicotinic acid by the nicotinic acid-CoA ligase olcI. Nicotinyl-CoA is then a substrate of polyketide synthase olcA to produce 4-hydroxy-6-(3-pyridinyl)-2H-pyran-2-one (HPPO) which is further prenylated by the polyprenyl transferase olcH to yield geranylgeranyl-HPPO. Geranylgeranyl pyrophosphate is provided by the cluster-specific geranylgeranyl pyrophosphate synthase olcC. The FAD-dependent monooxygenase olcE catalyzes the epoxidation of geranylgeranyl-HPPO and the terpene cyclase olcD catalyzes the cyclization of the terpenoid component, resulting in the formation of the tricyclic terpene moiety seen in predecaturin E. The cytochrome P450 monooxygenase then catalyzes the allylic oxidation of predecaturin E, which is followed by spirocylization with concomitant loss of one molecule of water to form decaturin E. Decaturin E is the substrate of the cytochrome P450 monooxygenase olcJ which hydroxylates it at the C-29 position to form decaturin F. The short-chain dehydrogenase/reductase olcF may catalyze the oxidation of decaturin F to generate the 29-hydroxyl-27-one intermediate, and subsequent hemiacetal formation probably leads to the formation of decaturin C. The dioxygenase olcK may be a peroxisomal enzyme that catalyzes the hydroxylation of decaturin C into decaturin A once decaturin C is shuttled into the peroxisome by the MFS transporter olcL. Finally the cytochrome P450 monooxygenase olcB catalyzes the oxidative rearrangement to yield 15-deoxyoxalicine B. In the absence of olcJ, decaturin E may be shunted to a pathway in which it is oxidized to a ketone, possibly by olcF, to form decaturin D, which undergoes further allylic oxidation to yield decaturin G. Moreover, in the absence of oclK or oclL, oclB can convert decaturin C into 15-deoxyoxalicine A. The protein is Terpene cyclase olcD of Penicillium canescens.